The sequence spans 296 residues: MPWIQLRLNTTGQLAESLGDALMENGAVSVTFQDSHDNPVFEPLPGETRLWGDTDVIGLYDAETDMKAVISQLEQVPELGERFIHKIEQLEDKDWEREWMDNFHPMRFGNRLWICPSWRDVPDPDAVNVMLDPGLAFGTGTHPTTSLCLQWLDSLNLEGKTVIDFGCGSGILAIAALKLGATHAIGIDIDPQAIQASRDNAERNGVLEHLTLYLAKNTPTDLESDVVIANILAGPLRELAPVIGALPKPGGLLGLSGILTNQAESVIQAYTDKFVIDPVAEREEWCRISGVKIATN.

T145, G166, D188, and N230 together coordinate S-adenosyl-L-methionine.

The protein belongs to the methyltransferase superfamily. PrmA family.

The protein resides in the cytoplasm. It catalyses the reaction L-lysyl-[protein] + 3 S-adenosyl-L-methionine = N(6),N(6),N(6)-trimethyl-L-lysyl-[protein] + 3 S-adenosyl-L-homocysteine + 3 H(+). Its function is as follows. Methylates ribosomal protein L11. The chain is Ribosomal protein L11 methyltransferase from Photorhabdus laumondii subsp. laumondii (strain DSM 15139 / CIP 105565 / TT01) (Photorhabdus luminescens subsp. laumondii).